The chain runs to 396 residues: Ribosomal RNA large subunit methyltransferase I (396 aa).

Positions 2–79 constitute a PUA domain; it reads AIRIKLKPGR…REEEIDREFF (78 aa).

This sequence belongs to the methyltransferase superfamily. RlmI family.

Its subcellular location is the cytoplasm. It catalyses the reaction cytidine(1962) in 23S rRNA + S-adenosyl-L-methionine = 5-methylcytidine(1962) in 23S rRNA + S-adenosyl-L-homocysteine + H(+). Functionally, specifically methylates the cytosine at position 1962 (m5C1962) of 23S rRNA. This Shewanella oneidensis (strain ATCC 700550 / JCM 31522 / CIP 106686 / LMG 19005 / NCIMB 14063 / MR-1) protein is Ribosomal RNA large subunit methyltransferase I.